A 275-amino-acid polypeptide reads, in one-letter code: NH(3)-dependent NAD(+) synthetase (275 aa).

Gly46 to Ser53 provides a ligand contact to ATP. Asp52 provides a ligand contact to Mg(2+). Arg140 contributes to the deamido-NAD(+) binding site. Residue Thr160 participates in ATP binding. Glu165 is a binding site for Mg(2+). Deamido-NAD(+)-binding residues include Lys173 and Asp180. 2 residues coordinate ATP: Lys189 and Thr211. His260–Lys261 serves as a coordination point for deamido-NAD(+).

This sequence belongs to the NAD synthetase family. Homodimer.

The enzyme catalyses deamido-NAD(+) + NH4(+) + ATP = AMP + diphosphate + NAD(+) + H(+). Its pathway is cofactor biosynthesis; NAD(+) biosynthesis; NAD(+) from deamido-NAD(+) (ammonia route): step 1/1. Catalyzes the ATP-dependent amidation of deamido-NAD to form NAD. Uses ammonia as a nitrogen source. The sequence is that of NH(3)-dependent NAD(+) synthetase from Escherichia coli O17:K52:H18 (strain UMN026 / ExPEC).